A 921-amino-acid chain; its full sequence is cGMP-dependent 3',5'-cyclic phosphodiesterase (921 aa).

Methionine 1 is subject to N-acetylmethionine. 2 disordered regions span residues 1-21 (MRRQPAASRDLFAQEPVPPGS) and 177-198 (ESSVAPEATQNPPEEAAGDQKG). A compositionally biased stretch (polar residues) spans 177-188 (ESSVAPEATQNP). GAF domains follow at residues 220 to 357 (DASS…STVL) and 389 to 528 (DVSV…GISI). 3',5'-cyclic GMP is bound by residues serine 411, aspartate 426, isoleucine 445, tyrosine 468, and threonine 479. The 325-residue stretch at 558–882 (SDDEYTKLLH…EHWTKVSHKF (325 aa)) folds into the PDEase domain. Residue histidine 636 is the Proton donor of the active site. Zn(2+) is bound by residues histidine 640, histidine 676, aspartate 677, and aspartate 788. Residue aspartate 677 coordinates Mg(2+).

It belongs to the cyclic nucleotide phosphodiesterase family. PDE2 subfamily. In terms of assembly, homodimer. Zn(2+) is required as a cofactor. Mg(2+) serves as cofactor.

It localises to the cell membrane. It is found in the cytoplasm. Its subcellular location is the mitochondrion. The protein resides in the mitochondrion inner membrane. The protein localises to the mitochondrion outer membrane. The enzyme catalyses a nucleoside 3',5'-cyclic phosphate + H2O = a nucleoside 5'-phosphate + H(+). It carries out the reaction 3',5'-cyclic GMP + H2O = GMP + H(+). The catalysed reaction is 3',5'-cyclic AMP + H2O = AMP + H(+). With respect to regulation, the 3',5'-cyclic-AMP phosphodiesterase activity is stimulated by 3',5'-cyclic GMP. Functionally, cGMP-activated cyclic nucleotide phosphodiesterase with a dual-specificity for the second messengers cAMP and cGMP, which are key regulators of many important physiological processes. Has a higher efficiency with cGMP compared to cAMP. Plays a role in cell growth and migration. In terms of biological role, regulates mitochondrial cAMP levels and respiration. Involved in the regulation of mitochondria morphology/dynamics and apoptotic cell death via local modulation of cAMP/PKA signaling in the mitochondrion, including the monitoring of local cAMP levels at the outer mitochondrial membrane and of PKA-dependent phosphorylation of DNM1L. This is cGMP-dependent 3',5'-cyclic phosphodiesterase from Bos taurus (Bovine).